The sequence spans 112 residues: DNA-binding protein PF1087 (112 aa).

This sequence belongs to the PDCD5 family.

The sequence is that of DNA-binding protein PF1087 from Pyrococcus furiosus (strain ATCC 43587 / DSM 3638 / JCM 8422 / Vc1).